A 147-amino-acid polypeptide reads, in one-letter code: uncharacterized protein (147 aa).

A run of 4 helical transmembrane segments spans residues 13–33 (LSLVFGLLFTVSGIIEIIIGL), 45–65 (LFVGDVFGGLALLAVGIAYFL), 80–100 (YLFTASIIGLGIGVIAFLILI), and 116–136 (WGFFNDLTVYLVLGMLAIIPY).

It localises to the cell membrane. This is an uncharacterized protein from Methanocaldococcus jannaschii (strain ATCC 43067 / DSM 2661 / JAL-1 / JCM 10045 / NBRC 100440) (Methanococcus jannaschii).